We begin with the raw amino-acid sequence, 495 residues long: UDP-N-acetylmuramoyl-L-alanyl-D-glutamate--2,6-diaminopimelate ligase (495 aa).

UDP-N-acetyl-alpha-D-muramoyl-L-alanyl-D-glutamate is bound at residue Ser-29. 111–117 (GTNGKTS) is a binding site for ATP. Residues 153-154 (TT), Ser-180, Gln-186, and Arg-188 each bind UDP-N-acetyl-alpha-D-muramoyl-L-alanyl-D-glutamate. Lys-220 bears the N6-carboxylysine mark. Residues Arg-384, 408 to 411 (DNPR), Gly-459, and Glu-463 each bind meso-2,6-diaminopimelate. The Meso-diaminopimelate recognition motif motif lies at 408–411 (DNPR).

This sequence belongs to the MurCDEF family. MurE subfamily. Mg(2+) is required as a cofactor. Carboxylation is probably crucial for Mg(2+) binding and, consequently, for the gamma-phosphate positioning of ATP.

Its subcellular location is the cytoplasm. The catalysed reaction is UDP-N-acetyl-alpha-D-muramoyl-L-alanyl-D-glutamate + meso-2,6-diaminopimelate + ATP = UDP-N-acetyl-alpha-D-muramoyl-L-alanyl-gamma-D-glutamyl-meso-2,6-diaminopimelate + ADP + phosphate + H(+). It participates in cell wall biogenesis; peptidoglycan biosynthesis. Catalyzes the addition of meso-diaminopimelic acid to the nucleotide precursor UDP-N-acetylmuramoyl-L-alanyl-D-glutamate (UMAG) in the biosynthesis of bacterial cell-wall peptidoglycan. This Xylella fastidiosa (strain 9a5c) protein is UDP-N-acetylmuramoyl-L-alanyl-D-glutamate--2,6-diaminopimelate ligase.